A 295-amino-acid polypeptide reads, in one-letter code: Acetylglutamate kinase (295 aa).

Residues 66–67, Arg-88, and Asn-193 contribute to the substrate site; that span reads GG.

Belongs to the acetylglutamate kinase family. ArgB subfamily.

It localises to the cytoplasm. The catalysed reaction is N-acetyl-L-glutamate + ATP = N-acetyl-L-glutamyl 5-phosphate + ADP. It functions in the pathway amino-acid biosynthesis; L-arginine biosynthesis; N(2)-acetyl-L-ornithine from L-glutamate: step 2/4. In terms of biological role, catalyzes the ATP-dependent phosphorylation of N-acetyl-L-glutamate. The polypeptide is Acetylglutamate kinase (Afipia carboxidovorans (strain ATCC 49405 / DSM 1227 / KCTC 32145 / OM5) (Oligotropha carboxidovorans)).